We begin with the raw amino-acid sequence, 605 residues long: Golgi-associated RAB2 interactor protein 3 (605 aa).

2 disordered regions span residues 234 to 265 (GEGI…AART) and 407 to 529 (YMSE…ALQK). The span at 239-265 (HASHGTASAASPSTSTPGAAEGGAART) shows a compositional bias: low complexity. A compositionally biased stretch (basic residues) spans 434–457 (KKDRHPSRKSSHHRKAGESHRRRA). Positions 441-458 (RKSSHHRKAGESHRRRAG) match the Bipartite nuclear localization signal motif. The segment covering 463–473 (KASSHRSASGH) has biased composition (polar residues). Residues 475–484 (NTRDDKKEKG) show a composition bias toward basic and acidic residues. Residues 489-500 (RGKRHGSSRKSS) show a composition bias toward basic residues. A compositionally biased stretch (polar residues) spans 513-526 (QELGKNQSASSTGA). Ser-592 is modified (phosphoserine).

It belongs to the GARIN family. Interacts (via N-terminus) with RAB2B (in GTP-bound form). Interacts with FRG1. As to expression, expressed in adult spermatocytes and spermatids (at protein level).

Its subcellular location is the golgi apparatus. The protein localises to the nucleus. The protein resides in the cajal body. Functionally, may be involved in RNA biogenesis. This is Golgi-associated RAB2 interactor protein 3 from Homo sapiens (Human).